Reading from the N-terminus, the 437-residue chain is Sorting nexin-30 (437 aa).

The interval 1 to 45 is disordered; sequence MAGGPPKALPSTGPQSLRDMPHPLAGSSSEEAVGGDSTPSPDLLM. Thr-38 is modified (phosphothreonine). A Phosphoserine modification is found at Ser-40. One can recognise a PX domain in the interval 89-210; sequence RDLFVTVDDP…VFLTAKDLNA (122 aa). Residues Arg-132, Gln-134, Lys-162, and Arg-176 each coordinate a 1,2-diacyl-sn-glycero-3-phospho-(1D-myo-inositol-3-phosphate). Residues 234 to 437 form the BAR domain; that stretch reads KLRSRPLEFA…PLLQEKQETK (204 aa).

The protein belongs to the sorting nexin family. Heterodimer; heterodimerizes with SNX4.

Its subcellular location is the early endosome membrane. In terms of biological role, involved in the regulation of endocytosis and in several stages of intracellular trafficking. Together with SNX4, involved in autophagosome assembly. This is Sorting nexin-30 from Mus musculus (Mouse).